The primary structure comprises 121 residues: uncharacterized protein (121 aa).

The helical transmembrane segment at 11–31 threads the bilayer; it reads IFQFFVFPFYYFLLIITEIGF.

It is found in the membrane. This is an uncharacterized protein from Schizosaccharomyces pombe (strain 972 / ATCC 24843) (Fission yeast).